We begin with the raw amino-acid sequence, 167 residues long: Ubiquitin-fold modifier-conjugating enzyme 1 (167 aa).

The active-site Glycyl thioester intermediate is Cys-116. Residue Lys-122 forms a Glycyl lysine isopeptide (Lys-Gly) (interchain with G-Cter in UFM1) linkage.

It belongs to the ubiquitin-conjugating enzyme family. UFC1 subfamily. As to quaternary structure, interacts with UBA5 (via C-terminus). Interacts with UFL1. Interacts with UFM1. Interacts with KIRREL3. Post-translationally, ufmylated at Lys-122. Deufmylated by UFSP1.

Functionally, E2-like enzyme which specifically catalyzes the second step in ufmylation. Accepts the ubiquitin-like modifier UFM1 from the E1 enzyme UBA5 and forms an intermediate with UFM1 via a thioester linkage. Ufmylation is involved in various processes, such as ribosome recycling, response to DNA damage, interferon response or reticulophagy (also called ER-phagy). The protein is Ubiquitin-fold modifier-conjugating enzyme 1 of Homo sapiens (Human).